Reading from the N-terminus, the 232-residue chain is Flagellar L-ring protein (232 aa).

Positions 1–21 are cleaved as a signal peptide; that stretch reads MQKNAAHTYAISSLLVLSLTG. Cys-22 carries the N-palmitoyl cysteine lipid modification. Cys-22 is lipidated: S-diacylglycerol cysteine.

It belongs to the FlgH family. The basal body constitutes a major portion of the flagellar organelle and consists of four rings (L,P,S, and M) mounted on a central rod.

The protein localises to the cell outer membrane. The protein resides in the bacterial flagellum basal body. Assembles around the rod to form the L-ring and probably protects the motor/basal body from shearing forces during rotation. The protein is Flagellar L-ring protein of Escherichia coli O6:H1 (strain CFT073 / ATCC 700928 / UPEC).